We begin with the raw amino-acid sequence, 702 residues long: Phosphoglycerol transferase I (702 aa).

A run of 3 helical transmembrane segments spans residues 2–22 (HWMLLVSLLLLLWLLVASPRL), 71–91 (FSGYIAVFVGMLLLSLSPLLL), and 103–123 (GGAVFAGFVGMLLVGIAASPL).

The protein belongs to the OpgB family.

The protein localises to the cell inner membrane. It catalyses the reaction a phosphatidylglycerol + a membrane-derived-oligosaccharide D-glucose = a 1,2-diacyl-sn-glycerol + a membrane-derived-oligosaccharide 6-(glycerophospho)-D-glucose.. It participates in glycan metabolism; osmoregulated periplasmic glucan (OPG) biosynthesis. Its function is as follows. Transfers a phosphoglycerol residue from phosphatidylglycerol to the membrane-bound nascent glucan backbones. This Xanthomonas euvesicatoria pv. vesicatoria (strain 85-10) (Xanthomonas campestris pv. vesicatoria) protein is Phosphoglycerol transferase I.